The chain runs to 254 residues: MNPIAFHVGNLAIRWYGVIISIGAALGLLLAMYNCKIREASYDEFINMFLIAFPSAIIGARLYYVIFEFEDYRDNLINIFNTRQGGLAIHGGIIFGVLAVYIYLKYRKENFFEYVDVAAPSIILGQAIGRWGNFFNSEAHGGPVTKEFISKFPQFIQKGMFIEGTYYHPTFLYESIWNFIVCIFLVYLLKKTKKKGIVFMAYIGLYSLGRFFIEGLRTDSLYLGSIRVAQLISVLGIILSIFFIYNIIKKEKRY.

The next 3 membrane-spanning stretches (helical) occupy residues 11–31 (LAIR…LLLA), 49–69 (FLIA…IFEF), and 84–104 (QGGL…YIYL). Arg-130 contacts a 1,2-diacyl-sn-glycero-3-phospho-(1'-sn-glycerol). 3 helical membrane passes run 169–189 (PTFL…VYLL), 196–216 (GIVF…IEGL), and 228–248 (VAQL…YNII).

This sequence belongs to the Lgt family.

Its subcellular location is the cell membrane. The catalysed reaction is L-cysteinyl-[prolipoprotein] + a 1,2-diacyl-sn-glycero-3-phospho-(1'-sn-glycerol) = an S-1,2-diacyl-sn-glyceryl-L-cysteinyl-[prolipoprotein] + sn-glycerol 1-phosphate + H(+). The protein operates within protein modification; lipoprotein biosynthesis (diacylglyceryl transfer). In terms of biological role, catalyzes the transfer of the diacylglyceryl group from phosphatidylglycerol to the sulfhydryl group of the N-terminal cysteine of a prolipoprotein, the first step in the formation of mature lipoproteins. This Clostridium botulinum (strain Loch Maree / Type A3) protein is Phosphatidylglycerol--prolipoprotein diacylglyceryl transferase.